Here is a 254-residue protein sequence, read N- to C-terminus: 3-deoxy-manno-octulosonate cytidylyltransferase (254 aa).

Belongs to the KdsB family.

The protein resides in the cytoplasm. The enzyme catalyses 3-deoxy-alpha-D-manno-oct-2-ulosonate + CTP = CMP-3-deoxy-beta-D-manno-octulosonate + diphosphate. The protein operates within nucleotide-sugar biosynthesis; CMP-3-deoxy-D-manno-octulosonate biosynthesis; CMP-3-deoxy-D-manno-octulosonate from 3-deoxy-D-manno-octulosonate and CTP: step 1/1. It participates in bacterial outer membrane biogenesis; lipopolysaccharide biosynthesis. Functionally, activates KDO (a required 8-carbon sugar) for incorporation into bacterial lipopolysaccharide in Gram-negative bacteria. This is 3-deoxy-manno-octulosonate cytidylyltransferase from Haemophilus influenzae (strain ATCC 51907 / DSM 11121 / KW20 / Rd).